A 174-amino-acid chain; its full sequence is Trypsin inhibitor BvTI (174 aa).

2 disulfides stabilise this stretch: cysteine 41/cysteine 84 and cysteine 131/cysteine 138.

The protein belongs to the protease inhibitor I3 (leguminous Kunitz-type inhibitor) family.

The protein resides in the secreted. Its function is as follows. Inhibits bovine trypsin and chymotrypsin, and human plasmin, plasma kallikrein and factor XIIa. This is Trypsin inhibitor BvTI from Bauhinia variegata (Purple orchid tree).